A 500-amino-acid chain; its full sequence is Formate-nitrite transporter 3 (500 aa).

Topologically, residues 1–31 (MVLAASPEAYRKVIEYGIKKTKLRIDRLFLQ) are cytoplasmic. A helical membrane pass occupies residues 32–52 (AIMAGIYVGMAGHACTALAGA). At 53 to 69 (YSTDPANPLAVSKATQK) the chain is on the extracellular side. The chain crosses the membrane as a helical span at residues 70–90 (FLYASLFPVAFIAIIFTGAEL). Over 91–113 (FTGNTMTMLVCLLERRVTALQLC) the chain is Cytoplasmic. A helical transmembrane segment spans residues 114–134 (INWICSLVGNWAGALFAAYFL). The Extracellular portion of the chain corresponds to 135–164 (SYLPGVLQDPDHLHYLEDVAAHKTELSFLQ). A helical membrane pass occupies residues 165–185 (CFCLAVGCNTFVCLAVWFVIA). At 186–192 (SDDAAGK) the chain is on the cytoplasmic side. Residues 193–213 (IMSMWFPIVSFCVAGYEHIIA) traverse the membrane as a helical segment. Residues 214-237 (NFYTLQCALMHGVGPGVGTVILKN) are Extracellular-facing. The helical transmembrane segment at 238-258 (FIPTLLGNIVGGCGLVGAVYW) threads the bilayer. The Cytoplasmic segment spans residues 259–500 (YNFYPTVCVV…ALEEHPASTI (242 aa)). A disordered region spans residues 411-500 (PLRENSGVPS…ALEEHPASTI (90 aa)). Basic and acidic residues-rich tracts occupy residues 428–444 (GRVRRSSREREPERGGE) and 466–485 (FHPHVPREVEQSSLLEETRV).

Belongs to the FNT transporter (TC 1.A.16) family. In terms of assembly, homopentamer.

The protein resides in the cell membrane. It carries out the reaction (S)-lactate(in) + H(+)(in) = (S)-lactate(out) + H(+)(out). The catalysed reaction is formate(in) + H(+)(in) = formate(out) + H(+)(out). The enzyme catalyses pyruvate(out) + H(+)(out) = pyruvate(in) + H(+)(in). It catalyses the reaction acetate(out) + H(+)(out) = acetate(in) + H(+)(in). Inhibited by p-chloromercuribenzene sulfonate (pCMBS). Methyl methanethiosulfonate (MMTS) inhibits L-lactate but not formate transport. Inhibited by the Malaria Box compound MMV007839. Inhibited by BH-296, BH-317, BH-326 and BH-388 compounds. Monocarboxylate-proton symporter; active in acidic-to-neutral pH range. Transports L-lactate and formate. The chain is Formate-nitrite transporter 3 from Toxoplasma gondii (strain ATCC 50611 / Me49).